We begin with the raw amino-acid sequence, 351 residues long: GDSL esterase/lipase At3g14820 (351 aa).

An N-terminal signal peptide occupies residues 1-22 (MDLHLIGFLLWFFVVQVTTSSA). Asn-25 is a glycosylation site (N-linked (GlcNAc...) asparagine). Ser-39 serves as the catalytic Nucleophile. Active-site residues include Asp-325 and His-328.

It belongs to the 'GDSL' lipolytic enzyme family.

It is found in the secreted. The chain is GDSL esterase/lipase At3g14820 from Arabidopsis thaliana (Mouse-ear cress).